The sequence spans 160 residues: Ribosomal RNA large subunit methyltransferase H (160 aa).

S-adenosyl-L-methionine is bound by residues leucine 76, glycine 108, and 127–132; that span reads FGFMTW.

Belongs to the RNA methyltransferase RlmH family. Homodimer.

The protein resides in the cytoplasm. The catalysed reaction is pseudouridine(1915) in 23S rRNA + S-adenosyl-L-methionine = N(3)-methylpseudouridine(1915) in 23S rRNA + S-adenosyl-L-homocysteine + H(+). Functionally, specifically methylates the pseudouridine at position 1915 (m3Psi1915) in 23S rRNA. This is Ribosomal RNA large subunit methyltransferase H from Bartonella henselae (strain ATCC 49882 / DSM 28221 / CCUG 30454 / Houston 1) (Rochalimaea henselae).